A 455-amino-acid chain; its full sequence is GTPase Der (455 aa).

2 EngA-type G domains span residues 4–169 and 178–353; these read PVVA…PPKD and IQMA…EQHR. Residues 10 to 17, 57 to 61, 120 to 123, 184 to 191, 231 to 235, and 296 to 299 contribute to the GTP site; these read GRPNVGKS, DTGGL, NKCE, DTAGI, and NKWD. Positions 354–439 constitute a KH-like domain; that stretch reads RRVSTSVVNE…PLRLFWRGKQ (86 aa).

Belongs to the TRAFAC class TrmE-Era-EngA-EngB-Septin-like GTPase superfamily. EngA (Der) GTPase family. In terms of assembly, associates with the 50S ribosomal subunit.

GTPase that plays an essential role in the late steps of ribosome biogenesis. The sequence is that of GTPase Der from Synechococcus sp. (strain CC9605).